Reading from the N-terminus, the 161-residue chain is Large ribosomal subunit protein uL15 (161 aa).

The interval 1–57 (MRLKDAIPKKGSQQRGRRVGRGISAGQGASCGKGMRGQKSRSGGSTRPGFEGGQNPL) is disordered. A compositionally biased stretch (gly residues) spans 23–35 (ISAGQGASCGKGM).

This sequence belongs to the universal ribosomal protein uL15 family. Part of the 50S ribosomal subunit.

In terms of biological role, binds to the 23S rRNA. The polypeptide is Large ribosomal subunit protein uL15 (Trichodesmium erythraeum (strain IMS101)).